Consider the following 171-residue polypeptide: Co-chaperone protein HscB (171 aa).

The J domain occupies 2–74 (DYFTLFGLPA…LMRAEYLLSL (73 aa)).

The protein belongs to the HscB family. As to quaternary structure, interacts with HscA and stimulates its ATPase activity. Interacts with IscU.

Co-chaperone involved in the maturation of iron-sulfur cluster-containing proteins. Seems to help targeting proteins to be folded toward HscA. The polypeptide is Co-chaperone protein HscB (Escherichia coli (strain SMS-3-5 / SECEC)).